The chain runs to 422 residues: Succinate--CoA ligase [ADP-forming] subunit beta, mitochondrial (422 aa).

Residues 1–27 (MVRGSLGKLASRALSVAGKWQHQQLRR) constitute a mitochondrion transit peptide. The ATP-grasp domain occupies 36–279 (AELMGKYGIN…TTQEDPREVA (244 aa)). Residues lysine 75, 82 to 84 (GRG), and glutamate 142 contribute to the ATP site. The Mg(2+) site is built by asparagine 234 and aspartate 248. Residues asparagine 299 and 356–358 (GIM) contribute to the substrate site.

This sequence belongs to the succinate/malate CoA ligase beta subunit family. Heterodimer of an alpha and a beta subunit. Mg(2+) serves as cofactor.

The protein localises to the mitochondrion. It catalyses the reaction succinate + ATP + CoA = succinyl-CoA + ADP + phosphate. It functions in the pathway carbohydrate metabolism; tricarboxylic acid cycle; succinate from succinyl-CoA (ligase route): step 1/1. In terms of biological role, succinyl-CoA synthetase functions in the citric acid cycle (TCA), coupling the hydrolysis of succinyl-CoA to the synthesis of ATP and thus represents the only step of substrate-level phosphorylation in the TCA. The beta subunit provides nucleotide specificity of the enzyme and binds the substrate succinate, while the binding sites for coenzyme A and phosphate are found in the alpha subunit. The chain is Succinate--CoA ligase [ADP-forming] subunit beta, mitochondrial from Oryza sativa subsp. japonica (Rice).